The sequence spans 36 residues: Conotoxin Bu21 (36 aa).

Residues 1–21 (DGANAEATDNKPGVFERDEKK) constitute a propeptide that is removed on maturation. 2 cysteine pairs are disulfide-bonded: cysteine 22–cysteine 28 and cysteine 23–cysteine 34.

Belongs to the conotoxin A superfamily. In terms of tissue distribution, expressed by the venom duct.

The protein localises to the secreted. The chain is Conotoxin Bu21 from Conus bullatus (Bubble cone).